The primary structure comprises 310 residues: Malate dehydrogenase (310 aa).

Residues 7–12 and aspartate 32 each bind NAD(+); that span reads GAGNVG. Residues arginine 81 and arginine 87 each coordinate substrate. Residues asparagine 94 and 117 to 119 each bind NAD(+); that span reads VSN. Residues asparagine 119 and arginine 150 each coordinate substrate. The Proton acceptor role is filled by histidine 174.

Belongs to the LDH/MDH superfamily. MDH type 3 family. As to quaternary structure, homotetramer; arranged as a dimer of dimers.

The catalysed reaction is (S)-malate + NAD(+) = oxaloacetate + NADH + H(+). Its function is as follows. Catalyzes the reversible oxidation of malate to oxaloacetate. The polypeptide is Malate dehydrogenase (Prosthecochloris vibrioformis (Chlorobium vibrioforme)).